Here is a 79-residue protein sequence, read N- to C-terminus: ATP synthase subunit beta (79 aa).

Belongs to the ATPase alpha/beta chains family. As to quaternary structure, F-type ATPases have 2 components, CF(1) - the catalytic core - and CF(0) - the membrane proton channel. CF(1) has five subunits: alpha(3), beta(3), gamma(1), delta(1), epsilon(1). CF(0) has three main subunits: a(1), b(2) and c(9-12). The alpha and beta chains form an alternating ring which encloses part of the gamma chain. CF(1) is attached to CF(0) by a central stalk formed by the gamma and epsilon chains, while a peripheral stalk is formed by the delta and b chains.

It localises to the cell membrane. It catalyses the reaction ATP + H2O + 4 H(+)(in) = ADP + phosphate + 5 H(+)(out). Its function is as follows. Produces ATP from ADP in the presence of a proton gradient across the membrane. The catalytic sites are hosted primarily by the beta subunits. This Streptococcus downei (Streptococcus sobrinus) protein is ATP synthase subunit beta (atpD).